The sequence spans 148 residues: Large ribosomal subunit protein bL9 (148 aa).

It belongs to the bacterial ribosomal protein bL9 family.

In terms of biological role, binds to the 23S rRNA. This is Large ribosomal subunit protein bL9 from Pseudomonas savastanoi pv. phaseolicola (strain 1448A / Race 6) (Pseudomonas syringae pv. phaseolicola (strain 1448A / Race 6)).